Consider the following 131-residue polypeptide: Small ribosomal subunit protein uS11 (131 aa).

It belongs to the universal ribosomal protein uS11 family. In terms of assembly, part of the 30S ribosomal subunit. Interacts with proteins S7 and S18. Binds to IF-3.

Located on the platform of the 30S subunit, it bridges several disparate RNA helices of the 16S rRNA. Forms part of the Shine-Dalgarno cleft in the 70S ribosome. This chain is Small ribosomal subunit protein uS11, found in Pelobacter propionicus (strain DSM 2379 / NBRC 103807 / OttBd1).